Reading from the N-terminus, the 694-residue chain is Polyphosphate kinase (694 aa).

N45 contacts ATP. Mg(2+)-binding residues include R367 and R397. H427 (phosphohistidine intermediate) is an active-site residue. Residues Y460, R553, and H580 each contribute to the ATP site.

Belongs to the polyphosphate kinase 1 (PPK1) family. The cofactor is Mg(2+). In terms of processing, an intermediate of this reaction is the autophosphorylated ppk in which a phosphate is covalently linked to a histidine residue through a N-P bond.

The catalysed reaction is [phosphate](n) + ATP = [phosphate](n+1) + ADP. In terms of biological role, catalyzes the reversible transfer of the terminal phosphate of ATP to form a long-chain polyphosphate (polyP). The protein is Polyphosphate kinase of Campylobacter jejuni subsp. jejuni serotype O:6 (strain 81116 / NCTC 11828).